The sequence spans 467 residues: Methylenetetrahydrofolate--tRNA-(uracil-5-)-methyltransferase TrmFO (467 aa).

10–15 contributes to the FAD binding site; the sequence is GGGMAG.

The protein belongs to the MnmG family. TrmFO subfamily. The cofactor is FAD.

The protein resides in the cytoplasm. The catalysed reaction is uridine(54) in tRNA + (6R)-5,10-methylene-5,6,7,8-tetrahydrofolate + NADH + H(+) = 5-methyluridine(54) in tRNA + (6S)-5,6,7,8-tetrahydrofolate + NAD(+). It carries out the reaction uridine(54) in tRNA + (6R)-5,10-methylene-5,6,7,8-tetrahydrofolate + NADPH + H(+) = 5-methyluridine(54) in tRNA + (6S)-5,6,7,8-tetrahydrofolate + NADP(+). Functionally, catalyzes the folate-dependent formation of 5-methyl-uridine at position 54 (M-5-U54) in all tRNAs. The polypeptide is Methylenetetrahydrofolate--tRNA-(uracil-5-)-methyltransferase TrmFO (Hyphomonas neptunium (strain ATCC 15444)).